Here is a 337-residue protein sequence, read N- to C-terminus: Heat-inducible transcription repressor HrcA (337 aa).

This sequence belongs to the HrcA family.

Functionally, negative regulator of class I heat shock genes (grpE-dnaK-dnaJ and groELS operons). Prevents heat-shock induction of these operons. This chain is Heat-inducible transcription repressor HrcA, found in Metamycoplasma arthritidis (strain 158L3-1) (Mycoplasma arthritidis).